Reading from the N-terminus, the 231-residue chain is Ribose-5-phosphate isomerase A (231 aa).

Residues 32–35 (TGST), 85–88 (DGAD), and 98–101 (KGGG) each bind substrate. Glu107 acts as the Proton acceptor in catalysis. Residue Lys125 coordinates substrate.

Belongs to the ribose 5-phosphate isomerase family. As to quaternary structure, homodimer.

The enzyme catalyses aldehydo-D-ribose 5-phosphate = D-ribulose 5-phosphate. It functions in the pathway carbohydrate degradation; pentose phosphate pathway; D-ribose 5-phosphate from D-ribulose 5-phosphate (non-oxidative stage): step 1/1. Its function is as follows. Catalyzes the reversible conversion of ribose-5-phosphate to ribulose 5-phosphate. This chain is Ribose-5-phosphate isomerase A, found in Paraburkholderia xenovorans (strain LB400).